A 570-amino-acid polypeptide reads, in one-letter code: A-type ATP synthase subunit A (570 aa).

223–230 contacts ATP; that stretch reads GPFGSGKT.

It belongs to the ATPase alpha/beta chains family. As to quaternary structure, has multiple subunits with at least A(3), B(3), C, D, E, F, H, I and proteolipid K(x).

Its subcellular location is the cell membrane. It catalyses the reaction ATP + H2O + 4 H(+)(in) = ADP + phosphate + 5 H(+)(out). In terms of biological role, component of the A-type ATP synthase that produces ATP from ADP in the presence of a proton gradient across the membrane. The A chain is the catalytic subunit. This chain is A-type ATP synthase subunit A, found in Nanoarchaeum equitans (strain Kin4-M).